We begin with the raw amino-acid sequence, 458 residues long: Flavonol 3-O-glucosyltransferase F3GT2 (458 aa).

H20 serves as the catalytic Proton acceptor. An anthocyanidin is bound at residue H20. The Charge relay role is filled by D119. T141 serves as a coordination point for UDP-alpha-D-glucose. H150 is a binding site for an anthocyanidin. Positions 333, 335, 350, 353, 354, 355, and 358 each coordinate UDP-alpha-D-glucose. G373 is an an anthocyanidin binding site. D374 and Q375 together coordinate UDP-alpha-D-glucose.

The protein belongs to the UDP-glycosyltransferase family. Expressed in ovaries.

The enzyme catalyses a flavonol + UDP-alpha-D-glucose = a flavonol 3-O-beta-D-glucoside + UDP + H(+). Its pathway is flavonoid metabolism. Its function is as follows. Catalyzes the glucosylation of quercetin. Preferentially uses UDP-glucose as sugar donor, but is also able to use UDP-gal and UDP-xyl. Is probably not required for the accumulation of anthocyanin in red-fleshed kiwifruit varieties. The sequence is that of Flavonol 3-O-glucosyltransferase F3GT2 from Actinidia chinensis var. chinensis (Chinese soft-hair kiwi).